The primary structure comprises 1020 residues: Protein CLASP-2 (1020 aa).

The span at 259–271 shows a compositional bias: low complexity; that stretch reads ASDAASSSTSINS. Disordered regions lie at residues 259 to 280, 329 to 387, and 419 to 461; these read ASDA…PFRS, PMTT…RPSA, and LQKA…ALDT. Positions 329–343 are enriched in polar residues; that stretch reads PMTTRTLSKIDTSPG. The span at 372-381 shows a compositional bias: low complexity; sequence SQPGSRNGSP. A compositionally biased stretch (polar residues) spans 450 to 460; sequence QKATPQKSALD. An HEAT repeat occupies 954–992; sequence LAPCVIKSYDSPSSAVRKTAVYCLVAMVNKLGMKTMEPH.

This sequence belongs to the CLASP family. As to quaternary structure, interacts with hcp-1 and hcp-2.

The protein resides in the cytoplasm. It is found in the cytoskeleton. The protein localises to the microtubule organizing center. Its subcellular location is the centrosome. It localises to the chromosome. The protein resides in the centromere. It is found in the kinetochore. The protein localises to the spindle. Probable microtubule plus-end tracking protein that promotes the stabilization of dynamic microtubules. Required for the formation of mitotic and meiotic spindles. Specifically promotes the polymerization of kinetochore-bound microtubules. Also required for cytoplasmic streaming. Essential for embryonic development. The chain is Protein CLASP-2 (cls-2) from Caenorhabditis elegans.